We begin with the raw amino-acid sequence, 338 residues long: RNA 3'-terminal phosphate cyclase (338 aa).

ATP contacts are provided by residues Gln103 and 283–287 (YLADQ). His308 (tele-AMP-histidine intermediate) is an active-site residue.

The protein belongs to the RNA 3'-terminal cyclase family. Type 1 subfamily.

It localises to the cytoplasm. The enzyme catalyses a 3'-end 3'-phospho-ribonucleotide-RNA + ATP = a 3'-end 2',3'-cyclophospho-ribonucleotide-RNA + AMP + diphosphate. Functionally, catalyzes the conversion of 3'-phosphate to a 2',3'-cyclic phosphodiester at the end of RNA. The mechanism of action of the enzyme occurs in 3 steps: (A) adenylation of the enzyme by ATP; (B) transfer of adenylate to an RNA-N3'P to produce RNA-N3'PP5'A; (C) and attack of the adjacent 2'-hydroxyl on the 3'-phosphorus in the diester linkage to produce the cyclic end product. The biological role of this enzyme is unknown but it is likely to function in some aspects of cellular RNA processing. In Escherichia coli O45:K1 (strain S88 / ExPEC), this protein is RNA 3'-terminal phosphate cyclase.